Reading from the N-terminus, the 338-residue chain is Glycerol-3-phosphate dehydrogenase [NAD(P)+] (338 aa).

Residues Ser-13, Trp-14, and Lys-108 each coordinate NADPH. Sn-glycerol 3-phosphate-binding residues include Lys-108, Gly-139, and Ser-141. Ala-143 lines the NADPH pocket. Residues Lys-194, Asp-247, Ser-257, Arg-258, and Asn-259 each coordinate sn-glycerol 3-phosphate. Lys-194 serves as the catalytic Proton acceptor. Residue Arg-258 participates in NADPH binding. NADPH contacts are provided by Val-282 and Glu-284.

Belongs to the NAD-dependent glycerol-3-phosphate dehydrogenase family.

The protein localises to the cytoplasm. It carries out the reaction sn-glycerol 3-phosphate + NAD(+) = dihydroxyacetone phosphate + NADH + H(+). It catalyses the reaction sn-glycerol 3-phosphate + NADP(+) = dihydroxyacetone phosphate + NADPH + H(+). It participates in membrane lipid metabolism; glycerophospholipid metabolism. Its function is as follows. Catalyzes the reduction of the glycolytic intermediate dihydroxyacetone phosphate (DHAP) to sn-glycerol 3-phosphate (G3P), the key precursor for phospholipid synthesis. In Streptococcus pneumoniae (strain P1031), this protein is Glycerol-3-phosphate dehydrogenase [NAD(P)+].